We begin with the raw amino-acid sequence, 170 residues long: Large ribosomal subunit protein uL22c (170 aa).

Belongs to the universal ribosomal protein uL22 family. In terms of assembly, part of the 50S ribosomal subunit.

Its subcellular location is the plastid. It is found in the chloroplast. Its function is as follows. This protein binds specifically to 23S rRNA. The globular domain of the protein is located near the polypeptide exit tunnel on the outside of the subunit, while an extended beta-hairpin is found that lines the wall of the exit tunnel in the center of the 70S ribosome. The sequence is that of Large ribosomal subunit protein uL22c (rpl22) from Nandina domestica (Heavenly bamboo).